A 450-amino-acid polypeptide reads, in one-letter code: 3-phosphoshikimate 1-carboxyvinyltransferase (450 aa).

Residues K28, S29, and R33 each coordinate 3-phosphoshikimate. K28 provides a ligand contact to phosphoenolpyruvate. Phosphoenolpyruvate-binding residues include G100 and R128. Residues S173, Q175, D326, and K353 each coordinate 3-phosphoshikimate. Phosphoenolpyruvate is bound at residue Q175. Catalysis depends on D326, which acts as the Proton acceptor. Phosphoenolpyruvate contacts are provided by R357 and R402.

It belongs to the EPSP synthase family. In terms of assembly, monomer.

It localises to the cytoplasm. The catalysed reaction is 3-phosphoshikimate + phosphoenolpyruvate = 5-O-(1-carboxyvinyl)-3-phosphoshikimate + phosphate. Its pathway is metabolic intermediate biosynthesis; chorismate biosynthesis; chorismate from D-erythrose 4-phosphate and phosphoenolpyruvate: step 6/7. In terms of biological role, catalyzes the transfer of the enolpyruvyl moiety of phosphoenolpyruvate (PEP) to the 5-hydroxyl of shikimate-3-phosphate (S3P) to produce enolpyruvyl shikimate-3-phosphate and inorganic phosphate. This chain is 3-phosphoshikimate 1-carboxyvinyltransferase, found in Brucella canis (strain ATCC 23365 / NCTC 10854 / RM-666).